The primary structure comprises 337 residues: 1-aminocyclopropane-1-carboxylate deaminase (337 aa).

At lysine 50 the chain carries N6-(pyridoxal phosphate)lysine. Serine 77 functions as the Nucleophile in the catalytic mechanism.

Belongs to the ACC deaminase/D-cysteine desulfhydrase family. As to quaternary structure, homotrimer. It depends on pyridoxal 5'-phosphate as a cofactor.

It carries out the reaction 1-aminocyclopropane-1-carboxylate + H2O = 2-oxobutanoate + NH4(+). In terms of biological role, catalyzes a cyclopropane ring-opening reaction, the irreversible conversion of 1-aminocyclopropane-1-carboxylate (ACC) to ammonia and alpha-ketobutyrate. Allows growth on ACC as a nitrogen source. This is 1-aminocyclopropane-1-carboxylate deaminase from Rhizobium radiobacter (Agrobacterium tumefaciens).